The following is a 952-amino-acid chain: Protein translocase subunit SecA (952 aa).

Residues glutamine 104, 122-126 (GEGKT), and aspartate 512 each bind ATP.

The protein belongs to the SecA family. Monomer and homodimer. Part of the essential Sec protein translocation apparatus which comprises SecA, SecYEG and auxiliary proteins SecDF. Other proteins may also be involved.

It is found in the cell inner membrane. It localises to the cytoplasm. It carries out the reaction ATP + H2O + cellular proteinSide 1 = ADP + phosphate + cellular proteinSide 2.. Its function is as follows. Part of the Sec protein translocase complex. Interacts with the SecYEG preprotein conducting channel. Has a central role in coupling the hydrolysis of ATP to the transfer of proteins into and across the cell membrane, serving as an ATP-driven molecular motor driving the stepwise translocation of polypeptide chains across the membrane. The protein is Protein translocase subunit SecA of Gloeobacter violaceus (strain ATCC 29082 / PCC 7421).